The sequence spans 82 residues: Small ribosomal subunit protein bS16 (82 aa).

Belongs to the bacterial ribosomal protein bS16 family.

This is Small ribosomal subunit protein bS16 from Clostridium botulinum (strain Okra / Type B1).